A 356-amino-acid polypeptide reads, in one-letter code: UDP-N-acetylglucosamine--N-acetylmuramyl-(pentapeptide) pyrophosphoryl-undecaprenol N-acetylglucosamine transferase (356 aa).

Arg-166, Ser-196, and Gln-290 together coordinate UDP-N-acetyl-alpha-D-glucosamine.

Belongs to the glycosyltransferase 28 family. MurG subfamily.

The protein localises to the cell membrane. The catalysed reaction is Mur2Ac(oyl-L-Ala-gamma-D-Glu-L-Lys-D-Ala-D-Ala)-di-trans,octa-cis-undecaprenyl diphosphate + UDP-N-acetyl-alpha-D-glucosamine = beta-D-GlcNAc-(1-&gt;4)-Mur2Ac(oyl-L-Ala-gamma-D-Glu-L-Lys-D-Ala-D-Ala)-di-trans,octa-cis-undecaprenyl diphosphate + UDP + H(+). Its pathway is cell wall biogenesis; peptidoglycan biosynthesis. In terms of biological role, cell wall formation. Catalyzes the transfer of a GlcNAc subunit on undecaprenyl-pyrophosphoryl-MurNAc-pentapeptide (lipid intermediate I) to form undecaprenyl-pyrophosphoryl-MurNAc-(pentapeptide)GlcNAc (lipid intermediate II). The sequence is that of UDP-N-acetylglucosamine--N-acetylmuramyl-(pentapeptide) pyrophosphoryl-undecaprenol N-acetylglucosamine transferase from Staphylococcus aureus (strain bovine RF122 / ET3-1).